A 524-amino-acid polypeptide reads, in one-letter code: 2-isopropylmalate synthase (524 aa).

A Pyruvate carboxyltransferase domain is found at 15 to 275 (VVVFDTTMRD…PYGTSVDPVH (261 aa)). 4 residues coordinate Mn(2+): Asp24, His212, His214, and Asn248. The regulatory domain stretch occupies residues 401-524 (RVSRLRVVAG…RPEAAIASGF (124 aa)).

Belongs to the alpha-IPM synthase/homocitrate synthase family. LeuA type 1 subfamily. As to quaternary structure, homodimer. Requires Mn(2+) as cofactor.

It localises to the cytoplasm. It catalyses the reaction 3-methyl-2-oxobutanoate + acetyl-CoA + H2O = (2S)-2-isopropylmalate + CoA + H(+). The protein operates within amino-acid biosynthesis; L-leucine biosynthesis; L-leucine from 3-methyl-2-oxobutanoate: step 1/4. In terms of biological role, catalyzes the condensation of the acetyl group of acetyl-CoA with 3-methyl-2-oxobutanoate (2-ketoisovalerate) to form 3-carboxy-3-hydroxy-4-methylpentanoate (2-isopropylmalate). The chain is 2-isopropylmalate synthase from Caulobacter vibrioides (strain ATCC 19089 / CIP 103742 / CB 15) (Caulobacter crescentus).